We begin with the raw amino-acid sequence, 91 residues long: uncharacterized protein (91 aa).

The Integrase catalytic domain maps to 1 to 91 (MLTFWHWKWL…YQNILRENGI (91 aa)).

This is an uncharacterized protein from Haemophilus influenzae (strain ATCC 51907 / DSM 11121 / KW20 / Rd).